We begin with the raw amino-acid sequence, 105 residues long: Dynein axonemal light chain 4 (105 aa).

Belongs to the dynein light chain family. In terms of assembly, consists of at least two heavy chains and a number of intermediate and light chains.

Its subcellular location is the cytoplasm. The protein localises to the cytoskeleton. It is found in the cilium axoneme. Functionally, force generating protein of respiratory cilia. Produces force towards the minus ends of microtubules. Dynein has ATPase activity. The sequence is that of Dynein axonemal light chain 4 (Dnal4) from Mus musculus (Mouse).